The primary structure comprises 475 residues: ATP synthase subunit beta 1 (475 aa).

An ATP-binding site is contributed by 152–159 (GGAGVGKT).

This sequence belongs to the ATPase alpha/beta chains family. In terms of assembly, F-type ATPases have 2 components, CF(1) - the catalytic core - and CF(0) - the membrane proton channel. CF(1) has five subunits: alpha(3), beta(3), gamma(1), delta(1), epsilon(1). CF(0) has four main subunits: a(1), b(1), b'(1) and c(9-12).

The protein resides in the cell inner membrane. The catalysed reaction is ATP + H2O + 4 H(+)(in) = ADP + phosphate + 5 H(+)(out). Functionally, produces ATP from ADP in the presence of a proton gradient across the membrane. The catalytic sites are hosted primarily by the beta subunits. The sequence is that of ATP synthase subunit beta 1 from Cereibacter sphaeroides (strain ATCC 17029 / ATH 2.4.9) (Rhodobacter sphaeroides).